A 343-amino-acid chain; its full sequence is 2-alkenal reductase (NADP(+)-dependent) (343 aa).

Residues tyrosine 55 and tyrosine 80 each contribute to the substrate site. Residues 165–166, glycine 186, lysine 190, tyrosine 206, asparagine 230, cysteine 252, tyrosine 258, 282–284, and asparagine 332 each bind NADP(+); these read AV and FLV.

It belongs to the NADP-dependent oxidoreductase L4BD family. In terms of assembly, homodimer.

The catalysed reaction is an n-alkanal + NADP(+) = an alk-2-enal + NADPH + H(+). Reduces the C=C double bonds of alpha, beta unsaturated enones, but has no activity on enones with an endocyclic C=C double-bond. Shows a high specificity for NADPH as the hybrid donor. Substrates are 1-nitrocyclohexene, 2-methylpentenal, trans-cinnamaldehyde, methyl-trans-2-methylcinnamaldehyde, trans-2-nonenal and 1-octen-3-one. Reduced activity with aplha-methyl transcinnamaldehyde, 1-cyclohexene-1-carboxaldehyde, methyl crotonate, (R)-pulegone, and dimethyl itaconate and no activity with maleimides, citral, (5R)- or (5S)-carvone, (S)-perillyl alcohol, and substituted cyclohexenones and cyclopentenones. May also act as a allyl-alcohol dehydrogenase by catalyzing the dehydrogenation of secondary allylic alcohols rather than saturated secondary alcohols. Allyl-alcohol dehydrogenase is specific for the S-stereoisomer of the alcohols. This chain is 2-alkenal reductase (NADP(+)-dependent) (DBR), found in Nicotiana tabacum (Common tobacco).